A 356-amino-acid chain; its full sequence is RuBisCO accumulation factor 1 (356 aa).

Residues 9 to 192 are N-terminal alpha-helix; it reads LSEEERQELL…RALIEALLLD (184 aa). The segment at 216 to 342 is C-terminal beta-sheet; that stretch reads PRLLPFAGTL…LVLILRPKRV (127 aa).

The protein belongs to the RAF family. Homodimer. Forms an RbcL(8)-Raf1(8) complex. Forms complexes of many stoichiometries with RbcL with and without RbcS. RbcX and Raf1 can bind simultaneously to RbcL.

The protein localises to the cytoplasm. A major RuBisCO chaperone. Acts after GroEL-GroES chaperonin to fold and/or assemble the large subunit of RuBisCO (ccbL, rbcL). Cooperates with RbcX in RbcL folding, plays the major role in assembly of dimers into RbcL(8)-Raf1(8) intermediate complexes. RbcS replaces Raf1, leading to holoenzyme formation. Functionally, the Raf1 dimer brackets an RbcL dimer, leading to RbcL(8)-Raf1(8) complex formation. RbcS displaces Raf1, resulting in holoenzyme formation. Probably plays a role in early carboxysome assembly; in its absence CcaA, CcmM, CcmN, RbcL and RbcS colocalize in small patches while the shell proteins CcmK2, CcmK3 and CcmK4 are found diffused in the cytoplasm. Its function is as follows. It has been suggested that Raf1 and RbcX are partially functionally redundant. Other evidence suggests they are antagonistic in mediating RuBisCO assembly. The chain is RuBisCO accumulation factor 1 from Synechococcus elongatus (strain ATCC 33912 / PCC 7942 / FACHB-805) (Anacystis nidulans R2).